Consider the following 83-residue polypeptide: Aminoacyl carrier protein (83 aa).

In terms of domain architecture, Carrier spans 1–80 (MNATIREILA…DTVKLILDGK (80 aa)). Serine 35 carries the post-translational modification O-(pantetheine 4'-phosphoryl)serine.

4'-phosphopantetheine is transferred from CoA to a specific serine of the apo-form of this carrier protein.

Functionally, aminoacyl carrier protein. Can be charged with L-alanine, L-glycine or L-serine, via the formation of a thioester bond between the amino acid and the 4'-phosphopantetheinyl prosthetic group, catalyzed by the Atu2573 ligase. The polypeptide is Aminoacyl carrier protein (Agrobacterium fabrum (strain C58 / ATCC 33970) (Agrobacterium tumefaciens (strain C58))).